A 219-amino-acid chain; its full sequence is Cytidylate kinase (219 aa).

Residue 9-17 participates in ATP binding; the sequence is GPAGSGKTT.

It belongs to the cytidylate kinase family. Type 1 subfamily.

The protein resides in the cytoplasm. The catalysed reaction is CMP + ATP = CDP + ADP. It catalyses the reaction dCMP + ATP = dCDP + ADP. The sequence is that of Cytidylate kinase from Fervidobacterium nodosum (strain ATCC 35602 / DSM 5306 / Rt17-B1).